Reading from the N-terminus, the 443-residue chain is UDP-N-acetylmuramate--L-alanine ligase (443 aa).

ATP is bound at residue 110–116; it reads GAHGKTS.

This sequence belongs to the MurCDEF family.

The protein resides in the cytoplasm. The enzyme catalyses UDP-N-acetyl-alpha-D-muramate + L-alanine + ATP = UDP-N-acetyl-alpha-D-muramoyl-L-alanine + ADP + phosphate + H(+). It participates in cell wall biogenesis; peptidoglycan biosynthesis. Its function is as follows. Cell wall formation. The chain is UDP-N-acetylmuramate--L-alanine ligase from Streptococcus agalactiae serotype Ia (strain ATCC 27591 / A909 / CDC SS700).